The sequence spans 458 residues: F-box/WD repeat-containing protein 9 (458 aa).

Residue Met-1 is modified to N-acetylmethionine. Positions 1–28 are disordered; that stretch reads MELPPGPRDDPHAWDDDSDPELEPDTDA. Residues 16–28 are compositionally biased toward acidic residues; the sequence is DDSDPELEPDTDA. Ser-18 and Ser-59 each carry phosphoserine. In terms of domain architecture, F-box spans 76–123; it reads VPGLLSLPPELLLEICAYLDARLVLHVLPRVCHALRDLVRDRVTWRLR. WD repeat units lie at residues 171–210, 224–261, 264–301, 305–342, 344–381, 387–424, and 427–458; these read GHFA…VEPS, THKG…QQFG, KGKA…ALLK, LHSS…VLQR, QLDS…FQLV, GHRS…RTIC, and SHHN…RLQA.

In terms of assembly, interacts with SKP1 and CUL1.

In terms of biological role, substrate-recognition component of the SCF (SKP1-CUL1-F-box protein)-type E3 ubiquitin ligase complex. This chain is F-box/WD repeat-containing protein 9 (FBXW9), found in Bos taurus (Bovine).